Reading from the N-terminus, the 591-residue chain is Acyl-CoA-dependent acyltransferase MAC1 (591 aa).

The peroxisomal targeting signal type 1 stretch occupies residues 589 to 591 (ARL).

It belongs to the trichothecene O-acetyltransferase family.

The protein localises to the peroxisome. Its pathway is secondary metabolite biosynthesis. Its function is as follows. Acyl-CoA-dependent acyltransferase; part of the gene cluster that mediates the biosynthesis of mannosylerythritol lipids (MELs), surface-active substances that enhance the availability of water-insoluble substrates. Mannosylerythritol lipid production is responsible for hemolytic activity of Ustilago maydis. Depending on the number of acetyl groups, mannosylerythritol lipids can be differentiated into MEL A (fully acetylated), MEL B and MEL C (monoacetylated at R-6 and R-4, respectively), and the fully deacetylated MEL D. The first step in the pathway is the generation of mannosylerythritol by the glycosyltransferase EMT1 which catalyzes the transfer of GDP-mannose to the C-4 atom of meso-erythritol. This reaction has to be stereospecific, since only mannosyl-D-erythritol is generated. The produced disaccharide is subsequently acylated with fatty acids of various lengths derived from the peroxisomal beta-oxidation by the peroxisomal acyltransferases MAC1 and MAC2 at positions C-2 and C-3, repectively. The existence of MEL derivatives which carry an acetyl group at C-2 implies that at least MAC1 also accepts acetyl-CoA as a donor. The final step of MEL biosynthesis is the acetylation of the fully acylated mannosylerythritol lipids catalyzed by the acetyl-CoA-dependent acetyltransferase MAT1. MAT1 displays a relaxed regioselectivity and is able to transfer acetylgroups to both positions C-4 and C-6 of the mannosyl moiety. The chain is Acyl-CoA-dependent acyltransferase MAC1 from Mycosarcoma maydis (Corn smut fungus).